We begin with the raw amino-acid sequence, 223 residues long: Ribonuclease 3 (223 aa).

The region spanning 4 to 127 (YSQLEKRLNY…IIGAVYLEAG (124 aa)) is the RNase III domain. Glu40 serves as a coordination point for Mg(2+). The active site involves Asp44. Asn113 and Glu116 together coordinate Mg(2+). Glu116 is a catalytic residue. One can recognise a DRBM domain in the interval 154-223 (DYKTALQELT…AKIALEALKK (70 aa)).

This sequence belongs to the ribonuclease III family. In terms of assembly, homodimer. Mg(2+) serves as cofactor.

The protein localises to the cytoplasm. The catalysed reaction is Endonucleolytic cleavage to 5'-phosphomonoester.. In terms of biological role, digests double-stranded RNA. Involved in the processing of primary rRNA transcript to yield the immediate precursors to the large and small rRNAs (23S and 16S). Processes some mRNAs, and tRNAs when they are encoded in the rRNA operon. Processes pre-crRNA and tracrRNA of type II CRISPR loci if present in the organism. This Sulfurovum sp. (strain NBC37-1) protein is Ribonuclease 3.